The following is a 115-amino-acid chain: Large ribosomal subunit protein bL19 (115 aa).

It belongs to the bacterial ribosomal protein bL19 family.

This protein is located at the 30S-50S ribosomal subunit interface and may play a role in the structure and function of the aminoacyl-tRNA binding site. This Thermosipho africanus (strain TCF52B) protein is Large ribosomal subunit protein bL19.